Consider the following 200-residue polypeptide: Translation machinery-associated protein 22 (200 aa).

One can recognise an SUI1 domain in the interval 106 to 177; sequence VQIKRVERNK…DVLEWLVEVH (72 aa).

The protein belongs to the DENR family. Interacts with the 40S ribosomal subunit.

It localises to the cytoplasm. In Coccidioides immitis (strain RS) (Valley fever fungus), this protein is Translation machinery-associated protein 22 (TMA22).